Here is a 262-residue protein sequence, read N- to C-terminus: WUSCHEL-related homeobox 11 (262 aa).

Residues 1–11 (MDGGHSPDRHA) are compositionally biased toward basic and acidic residues. Disordered regions lie at residues 1-21 (MDGG…PVRS) and 79-115 (RRRQ…GHAG). The homeobox DNA-binding region spans 18–82 (PVRSRWTPKP…NRRSRSRRRQ (65 aa)). A compositionally biased stretch (low complexity) spans 84–112 (QLQAQAQAAAAAASSGSPPTASSGGLAPG).

It belongs to the WUS homeobox family. As to quaternary structure, interacts with ERF3.

The protein resides in the nucleus. Transcription factor which may be involved in developmental processes. Promotes the development of crown roots (both initiation and elongation), main components of the fibrous root system, by regulating the expression of genes required for crown root development and hormone-responsive genes involved in cytokinin (e.g. RR1, RR2, RR3 and RR4) and auxin (e.g. IAA5, IAA11, IAA23 and IAA31) signaling. This chain is WUSCHEL-related homeobox 11, found in Oryza sativa subsp. indica (Rice).